A 184-amino-acid polypeptide reads, in one-letter code: Succinate dehydrogenase cytochrome b560 subunit, mitochondrial (184 aa).

The chain crosses the membrane as a helical span at residues 65-94; sequence LTWMLSGFHRISGCVMAGTLLVGGLGFAVL. Residues 95 to 114 lie on the Mitochondrial intermembrane side of the membrane; the sequence is PLDFTTFVEYIRGWNLPCAV. The chain crosses the membrane as a helical span at residues 115-139; the sequence is TAVFKYIIAFPIIFHTLNGIRFLGF. H129 lines the heme pocket. At 140–147 the chain is on the mitochondrial matrix side; sequence DLAKGVDN. A helical transmembrane segment spans residues 148–169; the sequence is IGQVYKSGWLVFGVSAVIALAI. The Mitochondrial intermembrane portion of the chain corresponds to 170–172; it reads VIN.

It belongs to the cytochrome b560 family. Component of complex II composed of four subunits: a flavoprotein (FP), iron-sulfur protein (IP), and a cytochrome b560 composed of two transmembrane proteins. The cofactor is heme.

The protein resides in the mitochondrion inner membrane. It functions in the pathway carbohydrate metabolism; tricarboxylic acid cycle. Membrane-anchoring subunit of succinate dehydrogenase (SDH) that is involved in complex II of the mitochondrial electron transport chain and is responsible for transferring electrons from succinate to ubiquinone (coenzyme Q). Mediates resistance to enteropathogenic E.coli infection. The protein is Succinate dehydrogenase cytochrome b560 subunit, mitochondrial (mev-1) of Caenorhabditis briggsae.